Reading from the N-terminus, the 289-residue chain is Thioredoxin-like protein 1 (289 aa).

The 108-residue stretch at 2 to 109 (VGVKPVGSDP…EEKIKQHLEN (108 aa)) folds into the Thioredoxin domain. A disulfide bridge links C34 with C37. S113 is modified (phosphoserine). One can recognise a PITH domain in the interval 115-285 (EDADIPKGYM…NDFKRVVGKK (171 aa)).

Component of the 19S regulatory cap of the 26S proteasome. Interacts with PSMD14/RPN11. Interacts with, and reduces EEF1A1.

It localises to the cytoplasm. The protein localises to the nucleus. Active thioredoxin with a redox potential of about -250 mV. In Mus musculus (Mouse), this protein is Thioredoxin-like protein 1 (Txnl1).